We begin with the raw amino-acid sequence, 299 residues long: Acetylglutamate kinase (299 aa).

Substrate-binding positions include glycine 70–glycine 71, arginine 92, and asparagine 186.

This sequence belongs to the acetylglutamate kinase family. ArgB subfamily.

Its subcellular location is the cytoplasm. It carries out the reaction N-acetyl-L-glutamate + ATP = N-acetyl-L-glutamyl 5-phosphate + ADP. Its pathway is amino-acid biosynthesis; L-arginine biosynthesis; N(2)-acetyl-L-ornithine from L-glutamate: step 2/4. Catalyzes the ATP-dependent phosphorylation of N-acetyl-L-glutamate. This chain is Acetylglutamate kinase, found in Petrotoga mobilis (strain DSM 10674 / SJ95).